The following is a 368-amino-acid chain: Phospho-N-acetylmuramoyl-pentapeptide-transferase (368 aa).

9 helical membrane passes run 23–43 (YITFRAGAAAVTALIIILVFG), 72–92 (IPTMGGLMIILAIEVSGLLWA), 94–114 (IAEPFVWMVLLAIIWMGAVGF), 139–159 (VALGLIIGGYTFFDPTLSVLL), 170–190 (ITVDYGIWYIPLAIFIVTAVS), 201–221 (GLAAGSTAISVFSLAGFAYLT), 238–258 (AGEVTILSMAIVAACIGFLWF), 265–286 (VFMGDTGSLALGSAVAVIALLI), and 345–365 (KIVIRFWIIEVLLVLTSLLTL).

It belongs to the glycosyltransferase 4 family. MraY subfamily. Requires Mg(2+) as cofactor.

It is found in the cell inner membrane. The catalysed reaction is UDP-N-acetyl-alpha-D-muramoyl-L-alanyl-gamma-D-glutamyl-meso-2,6-diaminopimeloyl-D-alanyl-D-alanine + di-trans,octa-cis-undecaprenyl phosphate = di-trans,octa-cis-undecaprenyl diphospho-N-acetyl-alpha-D-muramoyl-L-alanyl-D-glutamyl-meso-2,6-diaminopimeloyl-D-alanyl-D-alanine + UMP. It functions in the pathway cell wall biogenesis; peptidoglycan biosynthesis. Its function is as follows. Catalyzes the initial step of the lipid cycle reactions in the biosynthesis of the cell wall peptidoglycan: transfers peptidoglycan precursor phospho-MurNAc-pentapeptide from UDP-MurNAc-pentapeptide onto the lipid carrier undecaprenyl phosphate, yielding undecaprenyl-pyrophosphoryl-MurNAc-pentapeptide, known as lipid I. The polypeptide is Phospho-N-acetylmuramoyl-pentapeptide-transferase (Chloroherpeton thalassium (strain ATCC 35110 / GB-78)).